Reading from the N-terminus, the 281-residue chain is LC-AMP precursor 3 (281 aa).

Positions 1–19 (MKYTIIPFLLLVALTCATA) are cleaved as a signal peptide. The propeptide occupies 20–56 (RSIDGSEKEVQEIREETPSSNEDVPFSLSANEDEEAR). Leu74 carries the leucine amide modification. Positions 75-89 (GREESLSANEDEEAR) are excised as a propeptide. At Ser114 the chain carries Serine amide. A propeptide spanning residues 115–129 (GREESFSANEDEEER) is cleaved from the precursor. Residue Leu147 is modified to Leucine amide. The propeptide occupies 148–162 (GREESISANEDEETR). Leu180 is subject to Leucine amide. A propeptide spanning residues 181-195 (GREESLSAIEDEEAR) is cleaved from the precursor. Leu213 carries the leucine amide modification. A propeptide spanning residues 214 to 228 (GREESLSANEDEEAR) is cleaved from the precursor. At Leu246 the chain carries Leucine amide. The propeptide occupies 247–261 (GREESLSANEDEEAR). Position 279 is a leucine amide (Leu279).

As to expression, expressed by the venom gland.

It localises to the secreted. In terms of biological role, antimicrobial peptide that acts by influencing bacterial cell membrane permeability at low concentrations and by directly disrupting structure-function at high concentrations. Shows activity against Gram-negative bacteria (S.typhimurium CGMCC 1.1174 (MIC=2.5 uM), E.coli CCTCC AB 2018675 (MIC=5 uM), S.dysenteriae CGMCC 1.1869 (MIC=2.5 uM), P.aeruginosa CGMCC 1.596 (MIC 5-10 uM), K.pneumoniae (MIC=10 uM), A.baumannii (MIC=5-10 uM)), and Gram-positive bacteria (S.aureus CMCC 26003 or MRSA ATCC 43300 (MIC=5 uM), and E.faecium (MIC=2.5-5 uM)). Inhibits biofilm formation of E.coli and S.aureus in a dose-dependent manner and disrupts established biofilms. Demonstrates minimal bacterial resistance, excellent stability, negligible mammalian cell toxicity, low hemolytic activity, and appropriate selectivity for both normal and tumor cells. When combined with traditional antibiotics, exhibits additive or synergistic therapeutic effects. In vivo, in a neutropenic mouse thigh infection model, exhibits a therapeutic effect in inhibiting bacterial proliferation. The chain is LC-AMP precursor 3 from Lycosa coelestis (Wolf spider).